Here is a 30-residue protein sequence, read N- to C-terminus: Dicynthaurin (30 aa).

Residue Thr-30 is modified to Threonine amide.

Homodimer.

The protein localises to the secreted. Its function is as follows. Shows antibacterial activity against both Gram-positive and Gram-negative bacteria. Its antimicrobial activity is optimal at NaCl concentrations below 100 mM, suggesting that the antimicrobial actions of this peptide may take place intracellularly rather than extracellularly. Has no activity against the fungus C.albicans. Has modest hemolytic activity. This is Dicynthaurin from Halocynthia aurantium (Sea peach).